The primary structure comprises 145 residues: Chaperonin GroEL (145 aa).

Belongs to the chaperonin (HSP60) family. In terms of assembly, forms a cylinder of 14 subunits composed of two heptameric rings stacked back-to-back. Interacts with the co-chaperonin GroES.

It is found in the cytoplasm. It catalyses the reaction ATP + H2O + a folded polypeptide = ADP + phosphate + an unfolded polypeptide.. Together with its co-chaperonin GroES, plays an essential role in assisting protein folding. The GroEL-GroES system forms a nano-cage that allows encapsulation of the non-native substrate proteins and provides a physical environment optimized to promote and accelerate protein folding. The chain is Chaperonin GroEL from Thermus thermophilus.